The chain runs to 94 residues: Large ribosomal subunit protein bL28 (94 aa).

It belongs to the bacterial ribosomal protein bL28 family.

The protein is Large ribosomal subunit protein bL28 of Novosphingobium aromaticivorans (strain ATCC 700278 / DSM 12444 / CCUG 56034 / CIP 105152 / NBRC 16084 / F199).